We begin with the raw amino-acid sequence, 346 residues long: UPF0065 protein in the TAR-I ttuE-ttuC' intergenic region (346 aa).

Residues 1–46 (MQASMLDSQWRLTIFSPRRKVKVSQMNSRFIAVLLTATILPWVAQA) form the signal peptide.

It belongs to the UPF0065 (bug) family.

The protein localises to the periplasm. The polypeptide is UPF0065 protein in the TAR-I ttuE-ttuC' intergenic region (Agrobacterium vitis (Rhizobium vitis)).